A 567-amino-acid polypeptide reads, in one-letter code: Arginine--tRNA ligase (567 aa).

Residues alanine 121–histidine 131 carry the 'HIGH' region motif.

It belongs to the class-I aminoacyl-tRNA synthetase family.

It localises to the cytoplasm. It catalyses the reaction tRNA(Arg) + L-arginine + ATP = L-arginyl-tRNA(Arg) + AMP + diphosphate. This chain is Arginine--tRNA ligase, found in Methanococcoides burtonii (strain DSM 6242 / NBRC 107633 / OCM 468 / ACE-M).